The primary structure comprises 317 residues: Insulin-like growth factor-binding protein 2 (317 aa).

A signal peptide spans 1-33 (MQPRLGGPALLLLPPLLLLLLLGAGGGDCGARA). Positions 35 to 126 (VLFRCPPCTP…VHGEGTCEKH (92 aa)) constitute an IGFBP N-terminal domain. Disulfide bonds link C39–C76, C42–C78, C50–C79, C68–C82, C90–C103, and C97–C123. Disordered stretches follow at residues 125–151 (KHGDAEYSASPEQVADNGEEHSEGGQV) and 189–218 (EQHRQMGKGGKHHLGLEEPKKLRPPPARTP). Residues 216–298 (RTPCQQELDQ…APTIRGDPEC (83 aa)) form the Thyroglobulin type-1 domain. 3 disulfides stabilise this stretch: C219–C253, C264–C275, and C277–C298. The short motif at 293-295 (RGD) is the Cell attachment site element.

As to quaternary structure, interacts with IGF1. Interacts with IGF2. Interacts (via RGD motif) with integrin alpha5/ITGA5; this interaction induces cell migration, adhesion or apoptosis according to the context. Interacts with PTPRB; this interaction leads to PTPRB dimerization and inactivation. In terms of processing, cleaved by MMP9 leading to release of free IGF2 from IGFBP2-IGF2 complex, which contributes to enhance the motility and the growth of astrocytes. O-glycosylated. In terms of tissue distribution, expressed in abundance in selected adult tissues, namely liver, kidney, adrenal, pituitary and choroid plexus.

The protein resides in the secreted. Multifunctional protein that plays a critical role in regulating the availability of IGFs such as IGF1 and IGF2 to their receptors and thereby regulates IGF-mediated cellular processes including proliferation, differentiation, and apoptosis in a cell-type specific manner. Functions coordinately with receptor protein tyrosine phosphatase beta/PTPRB and the IGF1 receptor to regulate IGF1-mediated signaling by stimulating the phosphorylation of PTEN leading to its inactivation and AKT1 activation. Plays a positive role in cell migration via interaction with integrin alpha5/ITGA5 through an RGD motif. Additionally, interaction with ITGA5/ITGB1 enhances the adhesion of endothelial progenitor cells to endothelial cells. Upon mitochondrial damage, facilitates apoptosis with ITGA5 of podocytes, and then activates the phosphorylation of focal adhesion kinase (FAK)-mediated mitochondrial injury. The polypeptide is Insulin-like growth factor-binding protein 2 (IGFBP2) (Ovis aries (Sheep)).